The following is a 504-amino-acid chain: Maturase K (504 aa).

It belongs to the intron maturase 2 family. MatK subfamily.

It localises to the plastid. It is found in the chloroplast. Functionally, usually encoded in the trnK tRNA gene intron. Probably assists in splicing its own and other chloroplast group II introns. This Lablab purpureus (Hyacinth bean) protein is Maturase K.